The sequence spans 411 residues: Putative ion-transport protein YfeO (411 aa).

Helical transmembrane passes span 9-29 (MLLL…VLIA), 54-74 (DSPF…GLII), 99-119 (ALPG…SLGP), 149-169 (ILAS…AALI), 186-206 (LFAP…FFHP), 223-243 (IASG…AVWC), 258-278 (VLIL…GGPL), 296-316 (LGAG…VIAA), 322-342 (GGRI…LHAH), 343-363 (VEAV…VLVV), and 386-406 (LLCI…LLAA).

Belongs to the chloride channel (TC 2.A.49) family.

Its subcellular location is the cell membrane. This Salmonella schwarzengrund (strain CVM19633) protein is Putative ion-transport protein YfeO.